Reading from the N-terminus, the 86-residue chain is Cytochrome c oxidase subunit 6B1 (86 aa).

Ala2 is modified (N-acetylalanine). The CHCH domain maps to 27–73; that stretch reads TRNCWQNYLDFHRCQKAMTAKGGDISVCEWYQRVYQSLCPTSWVTDW. Positions 30-40 match the Cx9C motif motif; that stretch reads CWQNYLDFHRC. Disulfide bonds link Cys30–Cys65 and Cys40–Cys54. The short motif at 54–65 is the Cx10C motif element; that stretch reads CEWYQRVYQSLC.

It belongs to the cytochrome c oxidase subunit 6B family. In terms of assembly, component of the cytochrome c oxidase (complex IV, CIV), a multisubunit enzyme composed of 14 subunits. The complex is composed of a catalytic core of 3 subunits MT-CO1, MT-CO2 and MT-CO3, encoded in the mitochondrial DNA, and 11 supernumerary subunits COX4I, COX5A, COX5B, COX6A, COX6B, COX6C, COX7A, COX7B, COX7C, COX8 and NDUFA4, which are encoded in the nuclear genome. The complex exists as a monomer or a dimer and forms supercomplexes (SCs) in the inner mitochondrial membrane with NADH-ubiquinone oxidoreductase (complex I, CI) and ubiquinol-cytochrome c oxidoreductase (cytochrome b-c1 complex, complex III, CIII), resulting in different assemblies (supercomplex SCI(1)III(2)IV(1) and megacomplex MCI(2)III(2)IV(2)).

Its subcellular location is the mitochondrion inner membrane. The protein operates within energy metabolism; oxidative phosphorylation. Component of the cytochrome c oxidase, the last enzyme in the mitochondrial electron transport chain which drives oxidative phosphorylation. The respiratory chain contains 3 multisubunit complexes succinate dehydrogenase (complex II, CII), ubiquinol-cytochrome c oxidoreductase (cytochrome b-c1 complex, complex III, CIII) and cytochrome c oxidase (complex IV, CIV), that cooperate to transfer electrons derived from NADH and succinate to molecular oxygen, creating an electrochemical gradient over the inner membrane that drives transmembrane transport and the ATP synthase. Cytochrome c oxidase is the component of the respiratory chain that catalyzes the reduction of oxygen to water. Electrons originating from reduced cytochrome c in the intermembrane space (IMS) are transferred via the dinuclear copper A center (CU(A)) of subunit 2 and heme A of subunit 1 to the active site in subunit 1, a binuclear center (BNC) formed by heme A3 and copper B (CU(B)). The BNC reduces molecular oxygen to 2 water molecules using 4 electrons from cytochrome c in the IMS and 4 protons from the mitochondrial matrix. The chain is Cytochrome c oxidase subunit 6B1 (COX6B1) from Pongo abelii (Sumatran orangutan).